The primary structure comprises 823 residues: Valine--tRNA ligase (823 aa).

The 'HIGH' region motif lies at 52–62; it reads PTVSGVLHMGH. A 'KMSKS' region motif is present at residues 549 to 553; sequence KMSKS. Lys-552 lines the ATP pocket.

This sequence belongs to the class-I aminoacyl-tRNA synthetase family. ValS type 2 subfamily. As to quaternary structure, monomer.

Its subcellular location is the cytoplasm. The enzyme catalyses tRNA(Val) + L-valine + ATP = L-valyl-tRNA(Val) + AMP + diphosphate. Catalyzes the attachment of valine to tRNA(Val). As ValRS can inadvertently accommodate and process structurally similar amino acids such as threonine, to avoid such errors, it has a 'posttransfer' editing activity that hydrolyzes mischarged Thr-tRNA(Val) in a tRNA-dependent manner. This chain is Valine--tRNA ligase, found in Anaplasma marginale (strain St. Maries).